Reading from the N-terminus, the 231-residue chain is Probable septum site-determining protein MinC (231 aa).

This sequence belongs to the MinC family. In terms of assembly, interacts with MinD and FtsZ.

In terms of biological role, cell division inhibitor that blocks the formation of polar Z ring septums. Rapidly oscillates between the poles of the cell to destabilize FtsZ filaments that have formed before they mature into polar Z rings. Prevents FtsZ polymerization. This chain is Probable septum site-determining protein MinC, found in Baumannia cicadellinicola subsp. Homalodisca coagulata.